The primary structure comprises 340 residues: Protein RecA (340 aa).

Residue 65–72 (GPESGGKT) coordinates ATP.

This sequence belongs to the RecA family.

The protein localises to the cytoplasm. Functionally, can catalyze the hydrolysis of ATP in the presence of single-stranded DNA, the ATP-dependent uptake of single-stranded DNA by duplex DNA, and the ATP-dependent hybridization of homologous single-stranded DNAs. It interacts with LexA causing its activation and leading to its autocatalytic cleavage. In Thermus thermophilus (strain ATCC BAA-163 / DSM 7039 / HB27), this protein is Protein RecA.